The chain runs to 190 residues: Thioredoxin F-type, chloroplastic (190 aa).

A disordered region spans residues 1 to 31 (MALHLSLSHQSWTSPAHPITSSDPTRSSVPG). The N-terminal 77 residues, 1-77 (MALHLSLSHQ…SMEQALGTQE (77 aa)), are a transit peptide targeting the chloroplast. The segment covering 7–30 (LSHQSWTSPAHPITSSDPTRSSVP) has biased composition (polar residues). Positions 78–189 (MEAIVGKVTE…LLEAIQAARS (112 aa)) constitute a Thioredoxin domain. Residues Cys-114 and Cys-117 each act as nucleophile in the active site. Cys-114 and Cys-117 are disulfide-bonded.

Belongs to the thioredoxin family. Plant F-type subfamily. Forms a complex with heterodimeric ferredoxin-thioredoxin reductase (FTR) and ferredoxin.

Its subcellular location is the plastid. The protein localises to the chloroplast. Its function is as follows. Participates in various redox reactions through the reversible oxidation of the active center dithiol to a disulfide. The F form is known to activate a number of enzymes of the photosynthetic carbon cycle. In Spinacia oleracea (Spinach), this protein is Thioredoxin F-type, chloroplastic.